We begin with the raw amino-acid sequence, 421 residues long: MFALIDVNGMYASCEQAFRPDLANRAVAVLSNNDGNIVARNYLAKKAGLKMGDPYFKVRPIIERHNIAIFSSNYTLYASMSARFAAVVESLASHVEQYSIDELFVDCKGITAAMSLDAFGRQLREEVRRHTTLVCGVGIARTKTLAKLCNHAAKTWPATGGVVALDDGARLKKLMSILPVAEVWGVGHRTEKALATMGIKTVLDLARADTRLIRKTFGVVLERTVRELRGEACFSLEENPPAKQQIVVSRSFGQRVETLTDMQQAVTGFAARAAEKLRNERQYCRVISVFIRTSPYSVRDTQYANQATEKLTVATQDSRTIIQAAQAALARIWREDIAYAKAGVMLADFSGKEAQLDLFDSATPSAGSEALMAVLDGINRRGKNQLFFAGQGIDNSFAMRRQMLSPDYTTDWRSIPIATIK.

One can recognise a UmuC domain in the interval 2-187; that stretch reads FALIDVNGMY…LPVAEVWGVG (186 aa).

It belongs to the DNA polymerase type-Y family.

Its function is as follows. Involved in UV protection and mutation. This is Protein MucB (mucB) from Salmonella typhimurium.